Reading from the N-terminus, the 145-residue chain is Basic phospholipase A2 cPm05 (145 aa).

Residues 1–21 (MYPAHLLVLLAVCISLLGASA) form the signal peptide. The propeptide occupies 22-27 (IPPLPL). 7 disulfides stabilise this stretch: C38–C98, C54–C144, C56–C72, C71–C125, C78–C118, C87–C111, and C105–C116. Ca(2+) contacts are provided by Y55, G57, and G59. The active site involves H75. D76 contacts Ca(2+). D119 is a catalytic residue.

It belongs to the phospholipase A2 family. Group I subfamily. D49 sub-subfamily. Ca(2+) is required as a cofactor. Expressed by the venom gland.

Its subcellular location is the secreted. It carries out the reaction a 1,2-diacyl-sn-glycero-3-phosphocholine + H2O = a 1-acyl-sn-glycero-3-phosphocholine + a fatty acid + H(+). PLA2 catalyzes the calcium-dependent hydrolysis of the 2-acyl groups in 3-sn-phosphoglycerides. The protein is Basic phospholipase A2 cPm05 of Laticauda semifasciata (Black-banded sea krait).